Reading from the N-terminus, the 320-residue chain is ATP-dependent 6-phosphofructokinase (320 aa).

Glycine 11 contacts ATP. ADP is bound at residue 21 to 25; it reads RAVTK. ATP contacts are provided by residues 72–73 and 102–105; these read RF and GDGS. Aspartate 103 serves as a coordination point for Mg(2+). Residue 125–127 coordinates substrate; that stretch reads TID. Aspartate 127 (proton acceptor) is an active-site residue. Residue arginine 154 participates in ADP binding. Substrate contacts are provided by residues arginine 162 and 169–171; that span reads MGR. Residues 185–187 and 213–215 each bind ADP; these read GAD and KDH. Residues glutamate 222, arginine 243, and 249 to 252 each bind substrate; that span reads HMQR.

This sequence belongs to the phosphofructokinase type A (PFKA) family. ATP-dependent PFK group I subfamily. Prokaryotic clade 'B1' sub-subfamily. Homotetramer. Mg(2+) serves as cofactor.

Its subcellular location is the cytoplasm. It carries out the reaction beta-D-fructose 6-phosphate + ATP = beta-D-fructose 1,6-bisphosphate + ADP + H(+). Its pathway is carbohydrate degradation; glycolysis; D-glyceraldehyde 3-phosphate and glycerone phosphate from D-glucose: step 3/4. Allosterically activated by ADP and other diphosphonucleosides, and allosterically inhibited by phosphoenolpyruvate. Functionally, catalyzes the phosphorylation of D-fructose 6-phosphate to fructose 1,6-bisphosphate by ATP, the first committing step of glycolysis. This is ATP-dependent 6-phosphofructokinase from Lactobacillus helveticus (strain DPC 4571).